The following is a 229-amino-acid chain: Large ribosomal subunit protein uL1 (229 aa).

Belongs to the universal ribosomal protein uL1 family. As to quaternary structure, part of the 50S ribosomal subunit.

Its function is as follows. Binds directly to 23S rRNA. The L1 stalk is quite mobile in the ribosome, and is involved in E site tRNA release. Functionally, protein L1 is also a translational repressor protein, it controls the translation of the L11 operon by binding to its mRNA. The chain is Large ribosomal subunit protein uL1 from Clostridium tetani (strain Massachusetts / E88).